Reading from the N-terminus, the 314-residue chain is Olfactory receptor 9A1 (314 aa).

Residues 1–24 are Extracellular-facing; it reads MLGNYSSATEFFLLGFPGSQEVCR. Asn-4 carries N-linked (GlcNAc...) asparagine glycosylation. The helical transmembrane segment at 25–45 threads the bilayer; that stretch reads ILFATFFLLYAVTVMGNVVII. Over 46–64 the chain is Cytoplasmic; the sequence is ITVCVDKCLQSPIYFFLGH. A helical membrane pass occupies residues 65–85; sequence LCVLEILITSTAVPFMLWGLL. At 86-99 the chain is on the extracellular side; that stretch reads LPSTQIMSLTACAA. An intrachain disulfide couples Cys-97 to Cys-179. Residues 100–120 traverse the membrane as a helical segment; sequence QLYLYLSLGTLELALMGVMAV. The Cytoplasmic segment spans residues 121–140; the sequence is DRYVAVCNPLRYNIIMNSST. The chain crosses the membrane as a helical span at residues 141–161; sequence FIWVIIVSWVLGFLSEIWPVY. The Extracellular portion of the chain corresponds to 162-196; that stretch reads ATFQLTFCKSSVLDHFYCDRGQLLKVSCEDTLFRE. The helical transmembrane segment at 197–217 threads the bilayer; it reads FILFLMAVFIIIGSLIPTIVS. The Cytoplasmic portion of the chain corresponds to 218–239; sequence YTYIISTNLKIPSASGWRKSFS. Residues 240 to 260 traverse the membrane as a helical segment; it reads TCASHFTYVVIGYGSCLFLYV. Over 261-271 the chain is Extracellular; it reads KPKQTQAAEYN. The chain crosses the membrane as a helical span at residues 272-292; it reads RVVSLLVLVVTPFLNPFIFTL. The Cytoplasmic portion of the chain corresponds to 293–314; sequence RNDKFIQAFGDGMKHCYKLLKN.

The protein belongs to the G-protein coupled receptor 1 family.

It localises to the cell membrane. Odorant receptor. This is Olfactory receptor 9A1 (OR9A1P) from Homo sapiens (Human).